A 210-amino-acid chain; its full sequence is Thymidylate kinase (210 aa).

Residue 10–17 (GPEGAGKS) participates in ATP binding.

The protein belongs to the thymidylate kinase family.

It catalyses the reaction dTMP + ATP = dTDP + ADP. Phosphorylation of dTMP to form dTDP in both de novo and salvage pathways of dTTP synthesis. The polypeptide is Thymidylate kinase (Pseudomonas fluorescens (strain ATCC BAA-477 / NRRL B-23932 / Pf-5)).